Reading from the N-terminus, the 727-residue chain is ABC transporter G family member 6 (727 aa).

The ABC transporter domain occupies 68-333; the sequence is LSFTDLTYSV…FAEFGHPIPE (266 aa). 126 to 133 lines the ATP pocket; it reads GASGSGKS. Residues 421-631 form the ABC transmembrane type-2 domain; sequence VELAVLAKRS…PYEAVLLNEF (211 aa). 6 helical membrane passes run 440 to 460, 475 to 495, 517 to 537, 560 to 580, 581 to 601, and 700 to 720; these read LFGIRLGAVLVTGFILATMFW, CFAFAMSTTFYTCADALPVFL, LSHSLVALPSLIILSLAFAAI, ASFWAGSSFVTFLSGVVPHVM, LGYTIVVAILAYFLLFSGFFI, and LWVTVAWGFFFRILFYFSLLL.

This sequence belongs to the ABC transporter superfamily. ABCG family. Eye pigment precursor importer (TC 3.A.1.204) subfamily.

The protein resides in the membrane. This Arabidopsis thaliana (Mouse-ear cress) protein is ABC transporter G family member 6 (ABCG6).